A 207-amino-acid chain; its full sequence is Germin-like protein 1 (207 aa).

The signal sequence occupies residues 1–17; it reads MLRIIFLLSLLFALSND. A disulfide bond links cysteine 23 and cysteine 38. Positions 51-197 constitute a Cupin type-1 domain; the sequence is FSLGTPGNTT…TTFLPPATVK (147 aa). Asparagine 58 is a glycosylation site (N-linked (GlcNAc...) asparagine). Residues histidine 99, histidine 101, glutamate 106, and histidine 145 each contribute to the Mn(2+) site.

The protein belongs to the germin family. In terms of assembly, oligomer (believed to be a pentamer but probably hexamer).

The protein localises to the secreted. It is found in the extracellular space. It localises to the apoplast. May play a role in plant defense. Probably has no oxalate oxidase activity even if the active site is conserved. The protein is Germin-like protein 1 (GER1) of Brassica napus (Rape).